The chain runs to 510 residues: Probable gamma-aminobutyrate transaminase 3, mitochondrial (510 aa).

The transit peptide at 1–41 (MICRSLLLLRSNAASKASNIVKHVAATGCLPKYSSEAPARY) directs the protein to the mitochondrion. 166-167 (GS) provides a ligand contact to pyridoxal 5'-phosphate. Tyrosine 199 lines the substrate pocket. Residue aspartate 306 coordinates pyridoxal 5'-phosphate. A substrate-binding site is contributed by lysine 335. Residue lysine 335 is modified to N6-(pyridoxal phosphate)lysine.

It belongs to the class-III pyridoxal-phosphate-dependent aminotransferase family.

Its subcellular location is the mitochondrion. The catalysed reaction is 4-aminobutanoate + pyruvate = succinate semialdehyde + L-alanine. It carries out the reaction 4-aminobutanoate + glyoxylate = succinate semialdehyde + glycine. Functionally, transaminase that degrades gamma-amino butyric acid (GABA). In Oryza sativa subsp. japonica (Rice), this protein is Probable gamma-aminobutyrate transaminase 3, mitochondrial.